Consider the following 517-residue polypeptide: G-protein coupled receptor Mth (517 aa).

The N-terminal stretch at 1–27 is a signal peptide; that stretch reads MKLFWVKRLLRISTVVVTLLLLQRTNA. The Extracellular segment spans residues 28–221; the sequence is AIPDCDYYDT…CLISPSRMGQ (194 aa). Disulfide bonds link Cys-32-Cys-86, Cys-88-Cys-93, Cys-97-Cys-191, Cys-98-Cys-109, and Cys-153-Cys-212. N-linked (GlcNAc...) asparagine glycosylation is found at Asn-48 and Asn-61. 3 N-linked (GlcNAc...) asparagine glycosylation sites follow: Asn-126, Asn-173, and Asn-201. Residues 222–242 traverse the membrane as a helical segment; it reads TVVMITSLVCMVLTITVYLFV. Over 243-251 the chain is Cytoplasmic; it reads KKLQNLHGK. A helical transmembrane segment spans residues 252–272; it reads CFMCYMVCLFMAYLLLLLNLW. Residues 273–279 lie on the Extracellular side of the membrane; that stretch reads QMSQNFC. Residues 280 to 300 form a helical membrane-spanning segment; the sequence is ITAGFLGYFFVMAAFLWLSVI. Residues 301 to 323 are Cytoplasmic-facing; the sequence is SLHLWNTFSGSAHNANRFLSEHR. Residues 324–344 form a helical membrane-spanning segment; sequence FLAYNTYAWGMAVVLTGITYL. Residues 345–373 lie on the Extracellular side of the membrane; the sequence is ADKVVENEDWNPRMGFGGHCWICTQSWSA. Residues 374 to 394 traverse the membrane as a helical segment; that stretch reads MLYFYGPMVFLIAFNITMFIL. Over 395 to 427 the chain is Cytoplasmic; that stretch reads TANRIIGVKKDIQKFAHRQERKQKLNSDKQTYT. The helical transmembrane segment at 428-448 threads the bilayer; it reads FFLRLFIIMGLTWSLEIGSYI. Residues 449–457 are Extracellular-facing; that stretch reads SQFNQTWSN. Residue Asn-452 is glycosylated (N-linked (GlcNAc...) asparagine). Residues 458–478 form a helical membrane-spanning segment; the sequence is VFLVADYLNWSQGIIIFILFV. Over 479–517 the chain is Cytoplasmic; sequence LKRSTLRLLMESIRGEGEEVNDSEEEISLENTKYDRNVL.

The protein belongs to the G-protein coupled receptor 2 family. Mth subfamily. In terms of assembly, homodimer.

Its subcellular location is the cell membrane. Its function is as follows. Involved in biological aging and stress response. Essential for adult survival. The sequence is that of G-protein coupled receptor Mth (mth) from Drosophila yakuba (Fruit fly).